We begin with the raw amino-acid sequence, 282 residues long: HTH-type transcriptional activator RhaR (282 aa).

The 99-residue stretch at 179-277 (DKLITALANS…GMTPSQWRHL (99 aa)) folds into the HTH araC/xylS-type domain. 2 consecutive DNA-binding regions (H-T-H motif) follow at residues 196 to 217 (DAFC…RAQT) and 244 to 267 (ISEI…TRET).

Binds DNA as a dimer.

It localises to the cytoplasm. Activates expression of the rhaSR operon in response to L-rhamnose. This Salmonella schwarzengrund (strain CVM19633) protein is HTH-type transcriptional activator RhaR.